A 624-amino-acid polypeptide reads, in one-letter code: Chaperone protein HtpG (624 aa).

The a; substrate-binding stretch occupies residues 1–336; sequence MKGQETRGFQ…SSDLSLNVSR (336 aa). The tract at residues 337–552 is b; sequence EILQDSTVTR…ADEMSTQMAK (216 aa). The segment at 553-624 is c; it reads LFAAAGQKVP…IRRMNQLLVS (72 aa).

The protein belongs to the heat shock protein 90 family. Homodimer.

It localises to the cytoplasm. Molecular chaperone. Has ATPase activity. This is Chaperone protein HtpG from Shigella dysenteriae serotype 1 (strain Sd197).